The primary structure comprises 400 residues: MSESDLWLLPDGVEELLPPEATRIEELRRQLLDLYHSWGYEMIVPPLLEFLDSLLIGVGRDLELEMFKVTDQLTGRLMGIRADMTPQVARIDSRRSHDVASRFCYIGSVLRTKSPSMFSSRTPIQTGCELYGVVGSAADIEIISLMLETLNLAKISPLHMDIAHVGVYQAILAEAKLSKIQSEELFEALRRKAIPEVDEIAATIPDKAIRQKVMALPRLAGGKEKMKEARKIFAGNPDIEYALDEMSQVAAVIGERYPEVEIYFDFCEMRGYKYYTGLVFAAYTEGLGQAVAKGGRYDEVGRDFGRGRPAMGFSVDLKALYRMGKREWAQPAGAILAPNGQDAELWELIRQLRRSNRVIQLMPGEEAGHWASHCDRQIVRDESGQWIVKPLTEFNPNHVK.

Belongs to the class-II aminoacyl-tRNA synthetase family. HisZ subfamily. Heteromultimer composed of HisG and HisZ subunits.

The protein resides in the cytoplasm. Its pathway is amino-acid biosynthesis; L-histidine biosynthesis; L-histidine from 5-phospho-alpha-D-ribose 1-diphosphate: step 1/9. Required for the first step of histidine biosynthesis. May allow the feedback regulation of ATP phosphoribosyltransferase activity by histidine. The sequence is that of ATP phosphoribosyltransferase regulatory subunit from Hahella chejuensis (strain KCTC 2396).